A 163-amino-acid chain; its full sequence is Nucleotide-binding protein Npun_R4736 (163 aa).

The protein belongs to the YajQ family.

In terms of biological role, nucleotide-binding protein. This chain is Nucleotide-binding protein Npun_R4736, found in Nostoc punctiforme (strain ATCC 29133 / PCC 73102).